We begin with the raw amino-acid sequence, 265 residues long: Pre-protein VI (265 aa).

The propeptide occupies 1 to 33; sequence MEDINFSSLAPRHGTRPYMGTWNEIGTSQLNGG. Positions 34-54 are amphipathic alpha-helix essential for membrane lytic activity; that stretch reads AFNWNSIWSGLKNFGSTIKTY. An involved in endosomal membrane lysis region spans residues 36 to 53; sequence NWNSIWSGLKNFGSTIKT. Residues 48–74 form an interaction with hexon protein region; sequence GSTIKTYGTKAWNSQTGQMLRDKLKDQ. A Nuclear export signal motif is present at residues 67-76; it reads LRDKLKDQNF. The segment at 123–155 is disordered; the sequence is LETVPGSVPTKGEKRPRPDAEETLVTHTTEPPS. The span at 133–142 shows a compositional bias: basic and acidic residues; that stretch reads KGEKRPRPDA. The Nuclear localization signal motif lies at 136-140; it reads KRPRP. T148 carries the phosphothreonine; by host modification. Positions 153–156 match the PPXY motif motif; the sequence is PPSY. The Nuclear export signal signature appears at 246–257; sequence STLNSIVGLGVK. The interval 248–254 is interaction with hexon protein; that stretch reads LNSIVGL. Residues 255–265 are binds to importin alpha/beta, involved in hexon nuclear import; it reads GVKSLKRRRCY. The Nuclear localization signal motif lies at 260-263; sequence KRRR.

The protein belongs to the adenoviridae protein VI family. Interacts with hexon protein; this interaction allows nuclear import of hexon trimers and possibly pre-capsid assembly. Interacts (via C-terminal NLS) with importin alpha/beta. As to quaternary structure, interacts (via PPxY motif) with host NEDD4 ubiquitine ligase; this interaction might play a role in virus intracellular transport during entry. Part of a complex composed of the core-capsid bridging protein, the endosome lysis protein VI and the hexon-linking protein VIII; these interactions bridge the virus core to the capsid. Interacts with peripentonal hexons; this interaction stabilizes the capsid by gluing two peripentonal hexons together and joining them with an adjacent group-of-nine hexon. In terms of assembly, heterodimer with the viral protease; disulfide-linked. Interacts with the viral protease. Ubiquitinated by Nedd4 following partial capsid disassembly; which might play a role in intracellular virus movement during entry. In terms of processing, contains the major nuclear import and export signals. Proteolytically removed during virion maturation. The processing of the C-terminus turns the precursor into a mature viral structural protein and abrogates its ability to promote hexon import and act as a potential chaperone protein.

Its subcellular location is the host nucleus. It is found in the host cytoplasm. It localises to the virion. During virus assembly, promotes hexon trimers nuclear import through nuclear pore complexes via an importin alpha/beta-dependent mechanism. By analogy to herpesviruses capsid assembly, might act as a chaperone to promote the formation of the icosahedral capsid. Functionally, structural component of the virion that provides increased stability to the particle shell through its interaction with the core-capsid bridging protein and the hexon-linking protein VIII. Fibers shedding during virus entry into host cell allows the endosome lysis protein to be exposed as a membrane-lytic peptide. Exhibits pH-independent membrane fragmentation activity and probably mediates viral rapid escape from host endosome via organellar membrane lysis. It is not clear if it then remains partially associated with the capsid and involved in the intracellular microtubule-dependent transport of capsid to the nucleus, or if it is lost during endosomal penetration. In terms of biological role, cofactor that activates the viral protease. Binds to viral protease in a 1:1 ratio. This chain is Pre-protein VI, found in Human adenovirus A serotype 12 (HAdV-12).